The following is a 504-amino-acid chain: Maturase K (504 aa).

It belongs to the intron maturase 2 family. MatK subfamily.

Its subcellular location is the plastid. The protein localises to the chloroplast. Its function is as follows. Usually encoded in the trnK tRNA gene intron. Probably assists in splicing its own and other chloroplast group II introns. This chain is Maturase K, found in Gossypium barbadense (Sea Island cotton).